The primary structure comprises 274 residues: 4-hydroxy-tetrahydrodipicolinate reductase (274 aa).

Residues 11 to 16 (GGSGRM) and Glu-37 each bind NAD(+). Arg-38 is a binding site for NADP(+). Residues 101-103 (GTT) and 125-128 (APNM) contribute to the NAD(+) site. His-158 (proton donor/acceptor) is an active-site residue. Residue His-159 participates in (S)-2,3,4,5-tetrahydrodipicolinate binding. Catalysis depends on Lys-162, which acts as the Proton donor. 168 to 169 (GT) contacts (S)-2,3,4,5-tetrahydrodipicolinate.

The protein belongs to the DapB family.

The protein localises to the cytoplasm. It carries out the reaction (S)-2,3,4,5-tetrahydrodipicolinate + NAD(+) + H2O = (2S,4S)-4-hydroxy-2,3,4,5-tetrahydrodipicolinate + NADH + H(+). The enzyme catalyses (S)-2,3,4,5-tetrahydrodipicolinate + NADP(+) + H2O = (2S,4S)-4-hydroxy-2,3,4,5-tetrahydrodipicolinate + NADPH + H(+). It participates in amino-acid biosynthesis; L-lysine biosynthesis via DAP pathway; (S)-tetrahydrodipicolinate from L-aspartate: step 4/4. Catalyzes the conversion of 4-hydroxy-tetrahydrodipicolinate (HTPA) to tetrahydrodipicolinate. This chain is 4-hydroxy-tetrahydrodipicolinate reductase, found in Shewanella pealeana (strain ATCC 700345 / ANG-SQ1).